The primary structure comprises 283 residues: 4-hydroxy-tetrahydrodipicolinate reductase (283 aa).

NAD(+) contacts are provided by residues G15–M20 and G116–T118. H172 functions as the Proton donor/acceptor in the catalytic mechanism. H173 is a binding site for (S)-2,3,4,5-tetrahydrodipicolinate. Catalysis depends on K176, which acts as the Proton donor. (S)-2,3,4,5-tetrahydrodipicolinate is bound at residue G182–T183.

This sequence belongs to the DapB family.

Its subcellular location is the cytoplasm. It catalyses the reaction (S)-2,3,4,5-tetrahydrodipicolinate + NAD(+) + H2O = (2S,4S)-4-hydroxy-2,3,4,5-tetrahydrodipicolinate + NADH + H(+). It carries out the reaction (S)-2,3,4,5-tetrahydrodipicolinate + NADP(+) + H2O = (2S,4S)-4-hydroxy-2,3,4,5-tetrahydrodipicolinate + NADPH + H(+). Its pathway is amino-acid biosynthesis; L-lysine biosynthesis via DAP pathway; (S)-tetrahydrodipicolinate from L-aspartate: step 4/4. Its function is as follows. Catalyzes the conversion of 4-hydroxy-tetrahydrodipicolinate (HTPA) to tetrahydrodipicolinate. The polypeptide is 4-hydroxy-tetrahydrodipicolinate reductase (Prochlorococcus marinus (strain MIT 9313)).